We begin with the raw amino-acid sequence, 252 residues long: Phosphoglycolate phosphatase (252 aa).

Aspartate 13 acts as the Nucleophile in catalysis. The Mg(2+) site is built by aspartate 13, aspartate 15, and aspartate 192.

Belongs to the HAD-like hydrolase superfamily. CbbY/CbbZ/Gph/YieH family. As to quaternary structure, monomer. Mg(2+) is required as a cofactor. It depends on chloride as a cofactor.

The catalysed reaction is 2-phosphoglycolate + H2O = glycolate + phosphate. The protein operates within organic acid metabolism; glycolate biosynthesis; glycolate from 2-phosphoglycolate: step 1/1. In terms of biological role, specifically catalyzes the dephosphorylation of 2-phosphoglycolate. Is involved in the dissimilation of the intracellular 2-phosphoglycolate formed during the DNA repair of 3'-phosphoglycolate ends, a major class of DNA lesions induced by oxidative stress. This Shigella flexneri protein is Phosphoglycolate phosphatase.